Consider the following 298-residue polypeptide: ATP synthase gamma chain (298 aa).

The protein belongs to the ATPase gamma chain family. As to quaternary structure, F-type ATPases have 2 components, CF(1) - the catalytic core - and CF(0) - the membrane proton channel. CF(1) has five subunits: alpha(3), beta(3), gamma(1), delta(1), epsilon(1). CF(0) has three main subunits: a, b and c.

It localises to the cell inner membrane. Functionally, produces ATP from ADP in the presence of a proton gradient across the membrane. The gamma chain is believed to be important in regulating ATPase activity and the flow of protons through the CF(0) complex. In Desulfosudis oleivorans (strain DSM 6200 / JCM 39069 / Hxd3) (Desulfococcus oleovorans), this protein is ATP synthase gamma chain.